We begin with the raw amino-acid sequence, 325 residues long: TNFAIP3-interacting protein 3 (325 aa).

Disordered stretches follow at residues Met-1–Lys-30 and Arg-84–Glu-129. Over residues Ser-17–Thr-28 the composition is skewed to basic and acidic residues. Residues Ser-27–Cys-265 adopt a coiled-coil conformation. The tract at residues His-190–Ala-248 is ubiquitin-binding domain (UBD).

Interacts with TNFAIP3. Interacts with polyubiquitin. In terms of tissue distribution, highly expressed in lung, lymph node, thymus and fetal liver. Expressed at lower levels in bone marrow, brain, kidney, spleen, leukocytes and tonsils. Could be detected in heart, salivary gland, adrenal gland, pancreas, ovary and fetal brain. High levels detected in liver, colon, small intestine, muscle, stomach, testis, placenta, thyroid, uterus, prostate, skin and PBL.

In terms of biological role, binds to zinc finger protein TNFAIP3 and inhibits NF-kappa-B activation induced by tumor necrosis factor, Toll-like receptor 4 (TLR4), interleukin-1 and 12-O-tetradecanoylphorbol-13-acetate. Overexpression inhibits NF-kappa-B-dependent gene expression in response to lipopolysaccharide at a level downstream of TRAF6 and upstream of IKBKB. NF-kappa-B inhibition is independent of TNFAIP3 binding. The chain is TNFAIP3-interacting protein 3 from Homo sapiens (Human).